A 97-amino-acid chain; its full sequence is uncharacterized protein (97 aa).

The next 3 helical transmembrane spans lie at 5–25 (TLVA…SLSV), 27–47 (MVFV…LICY), and 77–97 (IISI…VFIL).

Its subcellular location is the membrane. This is an uncharacterized protein from Saccharomyces cerevisiae (strain ATCC 204508 / S288c) (Baker's yeast).